We begin with the raw amino-acid sequence, 82 residues long: Small ribosomal subunit protein bS16 (82 aa).

This sequence belongs to the bacterial ribosomal protein bS16 family.

This is Small ribosomal subunit protein bS16 from Desulfosudis oleivorans (strain DSM 6200 / JCM 39069 / Hxd3) (Desulfococcus oleovorans).